Reading from the N-terminus, the 264-residue chain is Methionine aminopeptidase (264 aa).

His-79 contributes to the substrate binding site. A divalent metal cation is bound by residues Asp-97, Asp-108, and His-171. His-178 is a substrate binding site. Residues Glu-204 and Glu-235 each contribute to the a divalent metal cation site.

It belongs to the peptidase M24A family. Methionine aminopeptidase type 1 subfamily. In terms of assembly, monomer. Co(2+) serves as cofactor. Zn(2+) is required as a cofactor. Requires Mn(2+) as cofactor. It depends on Fe(2+) as a cofactor.

It catalyses the reaction Release of N-terminal amino acids, preferentially methionine, from peptides and arylamides.. Functionally, removes the N-terminal methionine from nascent proteins. The N-terminal methionine is often cleaved when the second residue in the primary sequence is small and uncharged (Met-Ala-, Cys, Gly, Pro, Ser, Thr, or Val). Requires deformylation of the N(alpha)-formylated initiator methionine before it can be hydrolyzed. The sequence is that of Methionine aminopeptidase from Buchnera aphidicola subsp. Acyrthosiphon pisum (strain APS) (Acyrthosiphon pisum symbiotic bacterium).